The sequence spans 184 residues: ATP synthase subunit b, chloroplastic (184 aa).

Residues 27–49 form a helical membrane-spanning segment; it reads LATNLINLSVVLGVLIFFGKGVL.

Belongs to the ATPase B chain family. In terms of assembly, F-type ATPases have 2 components, F(1) - the catalytic core - and F(0) - the membrane proton channel. F(1) has five subunits: alpha(3), beta(3), gamma(1), delta(1), epsilon(1). F(0) has four main subunits: a(1), b(1), b'(1) and c(10-14). The alpha and beta chains form an alternating ring which encloses part of the gamma chain. F(1) is attached to F(0) by a central stalk formed by the gamma and epsilon chains, while a peripheral stalk is formed by the delta, b and b' chains.

It localises to the plastid. Its subcellular location is the chloroplast thylakoid membrane. F(1)F(0) ATP synthase produces ATP from ADP in the presence of a proton or sodium gradient. F-type ATPases consist of two structural domains, F(1) containing the extramembraneous catalytic core and F(0) containing the membrane proton channel, linked together by a central stalk and a peripheral stalk. During catalysis, ATP synthesis in the catalytic domain of F(1) is coupled via a rotary mechanism of the central stalk subunits to proton translocation. Functionally, component of the F(0) channel, it forms part of the peripheral stalk, linking F(1) to F(0). The chain is ATP synthase subunit b, chloroplastic from Lactuca sativa (Garden lettuce).